Here is a 317-residue protein sequence, read N- to C-terminus: MSGSPKFVSPFHRPHCLSAAAPAGQAKLTHPGKAILAGGIAGGIEICITFPTEYVKTQLQLDEKANPPRYKGIVDCVKQTVQGHGVKGLYRGLSSLLYGSIPKAAVRFGVFEFLSNQMRDESGKLDSTRGLICGLGAGVAEAVVVVCPMETVKVKFIHDQTSANPKYRGFFHGVREIVRTQGLKGTYQGLTATVLKQGSNQAIRFYVMTALRNWYKGDNPNKSINPVVTGLFGAVAGAASVFGNTPLDVIKTRMQGLEAHKYKSTVDCAIKIMKYEGPAAFYKGTVPRLGRVCMDVAIVFIIYEEVVKVLNKVWKTD.

Positions 1 to 20 (MSGSPKFVSPFHRPHCLSAA) are cleaved as a propeptide — removed in mature form. Solcar repeat units lie at residues 29-117 (THPG…LSNQ), 128-214 (TRGL…LRNW), and 224-309 (INPV…VVKV). Transmembrane regions (helical) follow at residues 35–55 (ILAG…TEYV), 130–150 (GLIC…CPME), 223–243 (SINP…SVFG), and 294–314 (MDVA…NKVW).

Belongs to the mitochondrial carrier (TC 2.A.29) family. In terms of processing, possesses a short cleavable presequence, which, however, is found to be dispensable both for targeting to mitochondria and insertion into the inner membrane. However, the presequence is required to keep SLC25A1 in a soluble state and thus in an import-competent state. Mature SLC25A1 lacking the presequence is prone to aggregation.

Its subcellular location is the mitochondrion inner membrane. It carries out the reaction (S)-malate(in) + citrate(out) = (S)-malate(out) + citrate(in). The catalysed reaction is D-threo-isocitrate(in) + citrate(out) = D-threo-isocitrate(out) + citrate(in). It catalyses the reaction citrate(out) + succinate(in) = citrate(in) + succinate(out). The enzyme catalyses cis-aconitate(in) + citrate(out) = cis-aconitate(out) + citrate(in). It carries out the reaction trans-aconitate(in) + citrate(out) = trans-aconitate(out) + citrate(in). The catalysed reaction is phosphoenolpyruvate(in) + citrate(out) = phosphoenolpyruvate(out) + citrate(in). It catalyses the reaction maleate(in) + citrate(out) = maleate(out) + citrate(in). Functionally, mitochondrial electroneutral antiporter that exports citrate from the mitochondria into the cytosol in exchange for malate. Also able to mediate the exchange of citrate for isocitrate, phosphoenolpyruvate, cis-aconitate and to a lesser extent trans-aconitate, maleate and succinate. In the cytoplasm, citrate plays important roles in fatty acid and sterol synthesis, regulation of glycolysis, protein acetylation, and other physiopathological processes. This is Tricarboxylate transport protein B, mitochondrial from Danio rerio (Zebrafish).